A 477-amino-acid polypeptide reads, in one-letter code: Bifunctional protein HldE (477 aa).

A ribokinase region spans residues 1 to 318 (MKVNLPAFER…ENAVRGRADT (318 aa)). Residue 195–198 (NLSE) coordinates ATP. Residue Asp264 is part of the active site. Residues 344–477 (MTNGVFDILH…IKKIQTESEK (134 aa)) form a cytidylyltransferase region.

This sequence in the N-terminal section; belongs to the carbohydrate kinase PfkB family. It in the C-terminal section; belongs to the cytidylyltransferase family. In terms of assembly, homodimer.

The enzyme catalyses D-glycero-beta-D-manno-heptose 7-phosphate + ATP = D-glycero-beta-D-manno-heptose 1,7-bisphosphate + ADP + H(+). The catalysed reaction is D-glycero-beta-D-manno-heptose 1-phosphate + ATP + H(+) = ADP-D-glycero-beta-D-manno-heptose + diphosphate. It functions in the pathway nucleotide-sugar biosynthesis; ADP-L-glycero-beta-D-manno-heptose biosynthesis; ADP-L-glycero-beta-D-manno-heptose from D-glycero-beta-D-manno-heptose 7-phosphate: step 1/4. Its pathway is nucleotide-sugar biosynthesis; ADP-L-glycero-beta-D-manno-heptose biosynthesis; ADP-L-glycero-beta-D-manno-heptose from D-glycero-beta-D-manno-heptose 7-phosphate: step 3/4. Its function is as follows. Catalyzes the phosphorylation of D-glycero-D-manno-heptose 7-phosphate at the C-1 position to selectively form D-glycero-beta-D-manno-heptose-1,7-bisphosphate. Functionally, catalyzes the ADP transfer from ATP to D-glycero-beta-D-manno-heptose 1-phosphate, yielding ADP-D-glycero-beta-D-manno-heptose. The protein is Bifunctional protein HldE of Salmonella enteritidis PT4 (strain P125109).